A 91-amino-acid polypeptide reads, in one-letter code: Mercuric transport protein periplasmic component (91 aa).

The N-terminal stretch at 1 to 19 (MKKLFASLALAAFVAPVFA) is a signal peptide. The region spanning 22–88 (QTVTLSVPGM…ATEDAGYPSS (67 aa)) is the HMA domain. C33 and C36 together coordinate Hg(2+).

It belongs to the MerP family. Monomer.

Its subcellular location is the periplasm. Functionally, involved in mercury resistance. Acts as a mercury scavenger that specifically binds to a mercuric ion in the periplasm and probably passes it to the cytoplasmic mercuric reductase MerA via the mercuric transport protein MerT. The chain is Mercuric transport protein periplasmic component from Acinetobacter calcoaceticus.